A 211-amino-acid polypeptide reads, in one-letter code: Nucleoside diphosphate kinase homolog 5 (211 aa).

The segment at 13 to 145 (EKTLALIKPD…EREIRFMFPA (133 aa)) is NDK.

Belongs to the NDK family. In terms of assembly, component of the axonemal radial spoke complex 1 (RS1), at least composed of spoke head proteins RSPH1, RSPH3, RSPH9 and the cilia-specific component RSPH4A or sperm-specific component RSPH6A, spoke stalk proteins RSPH14, DNAJB13, DYDC1, ROPN1L and NME5, and the anchor protein IQUB. Interacts with IQUB. Expressed in the trachea, ependymal cells and oviduct (at protein level). Expressed predominantly in germ cells of the testis. Not expressed in testicular somatic cells.

Its subcellular location is the cell projection. The protein localises to the cilium. The protein resides in the cytoplasm. It is found in the cytoskeleton. It localises to the flagellum axoneme. Functionally, functions as part of axonemal radial spoke complexes that play an important part in the motility of sperm and cilia. Does not seem to have nucleoside diphosphate kinase (NDPK) activity. Confers protection from cell death by BAX and alters the cellular levels of several antioxidant enzymes including GPX5. May play a role in spermiogenesis by increasing the ability of late-stage spermatids to eliminate reactive oxygen species. This chain is Nucleoside diphosphate kinase homolog 5 (Nme5), found in Mus musculus (Mouse).